The sequence spans 118 residues: Large ribosomal subunit protein bL19 (118 aa).

The protein belongs to the bacterial ribosomal protein bL19 family.

Its function is as follows. This protein is located at the 30S-50S ribosomal subunit interface and may play a role in the structure and function of the aminoacyl-tRNA binding site. In Frankia casuarinae (strain DSM 45818 / CECT 9043 / HFP020203 / CcI3), this protein is Large ribosomal subunit protein bL19.